The following is a 523-amino-acid chain: uncharacterized protein (523 aa).

In terms of domain architecture, Radical SAM core spans 193–447; sequence RKCSGCGNCR…ALKRRMIGKR (255 aa). Positions 212, 220, and 223 each coordinate [4Fe-4S] cluster.

The cofactor is [4Fe-4S] cluster.

This is an uncharacterized protein from Methanopyrus kandleri (strain AV19 / DSM 6324 / JCM 9639 / NBRC 100938).